A 465-amino-acid polypeptide reads, in one-letter code: Probable glycine dehydrogenase (decarboxylating) subunit 1 (465 aa).

It belongs to the GcvP family. N-terminal subunit subfamily. The glycine cleavage system is composed of four proteins: P, T, L and H. In this organism, the P 'protein' is a heterodimer of two subunits.

The catalysed reaction is N(6)-[(R)-lipoyl]-L-lysyl-[glycine-cleavage complex H protein] + glycine + H(+) = N(6)-[(R)-S(8)-aminomethyldihydrolipoyl]-L-lysyl-[glycine-cleavage complex H protein] + CO2. In terms of biological role, the glycine cleavage system catalyzes the degradation of glycine. The P protein binds the alpha-amino group of glycine through its pyridoxal phosphate cofactor; CO(2) is released and the remaining methylamine moiety is then transferred to the lipoamide cofactor of the H protein. The sequence is that of Probable glycine dehydrogenase (decarboxylating) subunit 1 from Aeropyrum pernix (strain ATCC 700893 / DSM 11879 / JCM 9820 / NBRC 100138 / K1).